A 965-amino-acid polypeptide reads, in one-letter code: Probable serine/threonine-protein kinase DDB_G0291516 (965 aa).

The interval 114–170 (KDSQKELLPSPQQLTPPTSLPSLPLLPLPQAPEQNEEQQLTQPPSPPSIPPPPPQKK) is disordered. Low complexity-rich tracts occupy residues 119 to 136 (ELLP…LPSL) and 144 to 155 (APEQNEEQQLTQ). Over residues 156–168 (PPSPPSIPPPPPQ) the composition is skewed to pro residues. ANK repeat units lie at residues 271–301 (KGET…HMGI) and 310–339 (LNKN…PLKM). One can recognise a Protein kinase domain in the interval 459–739 (IDFHTQIGSA…NVKAIKKEFL (281 aa)). ATP is bound by residues 465 to 473 (IGSAGNASV) and K486. D587 serves as the catalytic Proton acceptor. Residues 653–673 (IYSLGIILWELVCVAMTGTYI) traverse the membrane as a helical segment. N-linked (GlcNAc...) asparagine glycans are attached at residues N760, N765, N905, N909, N910, N914, N934, and N938. Residues 881–940 (NINKNKNNNNNNNNNNNNNNNINNNNTFNNSTNNNSNDNINIPYDFNNNNNNNNNSCNNS) are compositionally biased toward low complexity. The segment at 881–942 (NINKNKNNNN…NNNSCNNSKK (62 aa)) is disordered.

The protein belongs to the protein kinase superfamily. Ser/Thr protein kinase family.

The protein localises to the membrane. The enzyme catalyses L-seryl-[protein] + ATP = O-phospho-L-seryl-[protein] + ADP + H(+). The catalysed reaction is L-threonyl-[protein] + ATP = O-phospho-L-threonyl-[protein] + ADP + H(+). This chain is Probable serine/threonine-protein kinase DDB_G0291516, found in Dictyostelium discoideum (Social amoeba).